The primary structure comprises 210 residues: Endonuclease III (210 aa).

In terms of domain architecture, HhH spans 108–127 (FKALIKLPGVGRKTANVVLN). Residues C187, C194, C197, and C203 each contribute to the [4Fe-4S] cluster site.

It belongs to the Nth/MutY family. Requires [4Fe-4S] cluster as cofactor.

It catalyses the reaction 2'-deoxyribonucleotide-(2'-deoxyribose 5'-phosphate)-2'-deoxyribonucleotide-DNA = a 3'-end 2'-deoxyribonucleotide-(2,3-dehydro-2,3-deoxyribose 5'-phosphate)-DNA + a 5'-end 5'-phospho-2'-deoxyribonucleoside-DNA + H(+). Its function is as follows. DNA repair enzyme that has both DNA N-glycosylase activity and AP-lyase activity. The DNA N-glycosylase activity releases various damaged pyrimidines from DNA by cleaving the N-glycosidic bond, leaving an AP (apurinic/apyrimidinic) site. The AP-lyase activity cleaves the phosphodiester bond 3' to the AP site by a beta-elimination, leaving a 3'-terminal unsaturated sugar and a product with a terminal 5'-phosphate. The chain is Endonuclease III from Rickettsia conorii (strain ATCC VR-613 / Malish 7).